Reading from the N-terminus, the 152-residue chain is D-erythrulose-4-phosphate isomerase 2 (152 aa).

Catalysis depends on Cys70, which acts as the Proton acceptor.

Belongs to the LacAB/RpiB family.

The catalysed reaction is D-erythrulose 4-phosphate = D-erythrose 4-phosphate. Its pathway is carbohydrate metabolism; erythritol degradation. The protein operates within carbohydrate metabolism; D-threitol degradation. It functions in the pathway carbohydrate metabolism; L-threitol degradation. Functionally, catalyzes the isomerization of D-erythrulose-4P to D-erythrose-4P. Involved in the degradation pathways of L-threitol, D-threitol and erythritol, that allow M.smegmatis to grow on these compounds as the sole carbon source. This chain is D-erythrulose-4-phosphate isomerase 2, found in Mycolicibacterium smegmatis (strain ATCC 700084 / mc(2)155) (Mycobacterium smegmatis).